The following is a 637-amino-acid chain: Serine protease Hayan (637 aa).

An N-terminal signal peptide occupies residues 1-26 (MAMISARRYFLLGLLVLTTSAYVTVG). A Clip domain is found at 31–79 (PCQVRSDIPGICLSSSACENIRGYLKSGTLSTSQVPSCGFGAREEIICC). Cystine bridges form between Cys-32–Cys-78, Cys-42–Cys-68, and Cys-48–Cys-79. Disordered regions lie at residues 95-137 (FHAT…LDEN), 152-178 (KPQKTHESLKLPTQESMKTPTHESMKM), 216-260 (QRSF…NNNN), and 286-365 (LQTT…EKER). Residues 125–136 (EGKRERESRLDE) show a composition bias toward basic and acidic residues. The segment covering 234 to 244 (PLTTPRSRPQR) has biased composition (polar residues). The segment covering 245-260 (PNNSNFNTNPSPNNNN) has biased composition (low complexity). Positions 306–320 (EPYRFRGQDRDKDTQ) are enriched in basic and acidic residues. Residues 321-332 (PQEPWNDVSNNL) show a composition bias toward polar residues. Intrachain disulfides connect Cys-371–Cys-497, Cys-414–Cys-430, Cys-543–Cys-567, and Cys-578–Cys-609. In terms of domain architecture, Peptidase S1 spans 385 to 632 (ILDGERVDRG…FLDYIEGIVW (248 aa)). Catalysis depends on charge relay system residues His-429 and Asp-477. The active-site Charge relay system is Ser-582.

Belongs to the peptidase S1 family. CLIP subfamily.

Its subcellular location is the secreted. Serine protease which, by converting prophenoloxidase 1 (PPO1) into its active form, plays an essential role in the melanization immune response to physical or septic wounding. May function in diverse PPO1-activating cascades that are negatively controlled by different serpin proteins; Spn27A and Spn28D in the hemolymph, and Spn28D and Spn77BA in the trachea. Also required in the systematic wound response by mediating the redox-dependent activation of the JNK cytoprotective cascade in neuronal tissues after integument wounding. The sequence is that of Serine protease Hayan from Drosophila melanogaster (Fruit fly).